We begin with the raw amino-acid sequence, 613 residues long: Ribosome-associated molecular chaperone SSB1 (613 aa).

Residues 1 to 391 (MADGVFQGAI…ILTGQSTSDE (391 aa)) form a nucleotide binding domain (NBD) region. ATP contacts are provided by residues 16 to 18 (TTY), K73, 205 to 207 (GGT), 271 to 278 (ERAKRTLS), and G342. Positions 392–402 (TKDLLLLDVAP) are inter-domain linker. The segment at 403 to 613 (LSLGVGMQGD…RVVTKAMSSR (211 aa)) is substrate binding domain (SBD). A lid domain (SBDalpha) region spans residues 516–612 (SEDIEKMVNQ…KRVVTKAMSS (97 aa)). The short motif at 574–582 (IEAALADAL) is the Nuclear export signal element.

It belongs to the heat shock protein 70 family. Ssb-type Hsp70 subfamily. In terms of assembly, binds to ribosomes. Binds close to the ribosomal tunnel exit via contacts with both ribosomal proteins and rRNA. Directly interacts with nascent polypeptides. This interaction is dependent on the ribosome-associated complex (RAC). Interacts with SSE1. Interacts with FES1.

It localises to the cytoplasm. The catalysed reaction is ATP + H2O = ADP + phosphate + H(+). In terms of biological role, ribosome-bound, Hsp70-type chaperone that assists in the cotranslational folding of newly synthesized proteins in the cytosol. Stimulates folding by interacting with nascent chains, binding to short, largely hydrophobic sequences exposed by unfolded proteins, thereby stabilizing longer, more slowly translated, and aggregation-prone nascent polypeptides and domains that cannot fold stably until fully synthesized. The Hsp70-protein substrate interaction depends on ATP-binding and on allosteric regulation between the NBD and the SBD. The ATP-bound state is characterized by a fast exchange rate of substrate (low affinity state), while in the ADP-bound state exchange is much slower (high affinity state). During the Hsp70 cycle, the chaperone switches between the ATP-bound state (open conformation) and the ADP-bound state (closed conformation) by major conformational rearrangements involving mainly the lid domain. Ssb cooperates with a specific Hsp40/Hsp70 co-chaperone termed the ribosome-associated complex (RAC), which stimulates the ATPase activity of the ribosome-associated pool of Ssbs and switches it to the high affinity substrate binding state. Hsp110 chaperone SSE1 and FES1 act as nucleotide exchange factors that cause substrate release. This chain is Ribosome-associated molecular chaperone SSB1 (SSB1), found in Nakaseomyces delphensis (Yeast).